We begin with the raw amino-acid sequence, 217 residues long: Pyridoxine/pyridoxamine 5'-phosphate oxidase (217 aa).

FMN contacts are provided by residues 66 to 71, 81 to 82, R87, K88, and Q110; these read RMVLLK and FT. A substrate-binding site is contributed by K71. Y128, R132, and S136 together coordinate substrate. FMN contacts are provided by residues 145–146 and W190; that span reads QS. 196 to 198 is a binding site for substrate; sequence RLH. Position 200 (R200) interacts with FMN.

It belongs to the pyridoxamine 5'-phosphate oxidase family. Homodimer. Requires FMN as cofactor.

The catalysed reaction is pyridoxamine 5'-phosphate + O2 + H2O = pyridoxal 5'-phosphate + H2O2 + NH4(+). It carries out the reaction pyridoxine 5'-phosphate + O2 = pyridoxal 5'-phosphate + H2O2. It participates in cofactor metabolism; pyridoxal 5'-phosphate salvage; pyridoxal 5'-phosphate from pyridoxamine 5'-phosphate: step 1/1. The protein operates within cofactor metabolism; pyridoxal 5'-phosphate salvage; pyridoxal 5'-phosphate from pyridoxine 5'-phosphate: step 1/1. Functionally, catalyzes the oxidation of either pyridoxine 5'-phosphate (PNP) or pyridoxamine 5'-phosphate (PMP) into pyridoxal 5'-phosphate (PLP). The chain is Pyridoxine/pyridoxamine 5'-phosphate oxidase from Psychromonas ingrahamii (strain DSM 17664 / CCUG 51855 / 37).